Consider the following 351-residue polypeptide: Deoxyguanosinetriphosphate triphosphohydrolase-like protein (351 aa).

An HD domain is found at 75–196; it reads RLTHTLEVAE…VRVADIIAYL (122 aa).

The protein belongs to the dGTPase family. Type 2 subfamily.

In Desulfatibacillum aliphaticivorans, this protein is Deoxyguanosinetriphosphate triphosphohydrolase-like protein.